We begin with the raw amino-acid sequence, 222 residues long: MNRSLYRTRIKFCGMTRAGDIRLAGELGVDAVGFIFAHGSPRRVAPAEARAMRQATAPMVDVVALFRNNSKEEVREVVRTVRPTLLQFHGEEEDAFCRSFNLPYLKAVPMGSTGVNGEDANARTLQLSYPNTAGFLFDSHAPGAGGGTGKTFDWSRLPTGLHRPFLLAGGINAGNVFDAIVATLPWGVDVSSGVELAPGIKDGHKMRKFVEEVRRADCHEMS.

It belongs to the TrpF family.

It carries out the reaction N-(5-phospho-beta-D-ribosyl)anthranilate = 1-(2-carboxyphenylamino)-1-deoxy-D-ribulose 5-phosphate. It participates in amino-acid biosynthesis; L-tryptophan biosynthesis; L-tryptophan from chorismate: step 3/5. In Xanthomonas oryzae pv. oryzae (strain PXO99A), this protein is N-(5'-phosphoribosyl)anthranilate isomerase.